The following is a 338-amino-acid chain: Aspartate carbamoyltransferase catalytic subunit (338 aa).

Carbamoyl phosphate is bound by residues arginine 59 and threonine 60. Lysine 87 contacts L-aspartate. Carbamoyl phosphate contacts are provided by arginine 109, histidine 142, and glutamine 145. 2 residues coordinate L-aspartate: arginine 182 and arginine 253. Residues glycine 294 and proline 295 each contribute to the carbamoyl phosphate site.

This sequence belongs to the aspartate/ornithine carbamoyltransferase superfamily. ATCase family. As to quaternary structure, heterododecamer (2C3:3R2) of six catalytic PyrB chains organized as two trimers (C3), and six regulatory PyrI chains organized as three dimers (R2).

The enzyme catalyses carbamoyl phosphate + L-aspartate = N-carbamoyl-L-aspartate + phosphate + H(+). The protein operates within pyrimidine metabolism; UMP biosynthesis via de novo pathway; (S)-dihydroorotate from bicarbonate: step 2/3. Catalyzes the condensation of carbamoyl phosphate and aspartate to form carbamoyl aspartate and inorganic phosphate, the committed step in the de novo pyrimidine nucleotide biosynthesis pathway. In Prochlorococcus marinus (strain SARG / CCMP1375 / SS120), this protein is Aspartate carbamoyltransferase catalytic subunit.